We begin with the raw amino-acid sequence, 302 residues long: Sulfate adenylyltransferase subunit 2 (302 aa).

Belongs to the PAPS reductase family. CysD subfamily. Heterodimer composed of CysD, the smaller subunit, and CysN.

The catalysed reaction is sulfate + ATP + H(+) = adenosine 5'-phosphosulfate + diphosphate. Its pathway is sulfur metabolism; hydrogen sulfide biosynthesis; sulfite from sulfate: step 1/3. Its function is as follows. With CysN forms the ATP sulfurylase (ATPS) that catalyzes the adenylation of sulfate producing adenosine 5'-phosphosulfate (APS) and diphosphate, the first enzymatic step in sulfur assimilation pathway. APS synthesis involves the formation of a high-energy phosphoric-sulfuric acid anhydride bond driven by GTP hydrolysis by CysN coupled to ATP hydrolysis by CysD. In Escherichia coli O1:K1 / APEC, this protein is Sulfate adenylyltransferase subunit 2.